Here is an 84-residue protein sequence, read N- to C-terminus: Small ribosomal subunit protein uS15 (84 aa).

The protein belongs to the universal ribosomal protein uS15 family. As to quaternary structure, part of the 30S ribosomal subunit. Forms a bridge to the 50S subunit in the 70S ribosome, contacting the 23S rRNA.

Its function is as follows. One of the primary rRNA binding proteins, it binds directly to 16S rRNA where it helps nucleate assembly of the platform of the 30S subunit by binding and bridging several RNA helices of the 16S rRNA. Forms an intersubunit bridge (bridge B4) with the 23S rRNA of the 50S subunit in the ribosome. This chain is Small ribosomal subunit protein uS15, found in Akkermansia muciniphila (strain ATCC BAA-835 / DSM 22959 / JCM 33894 / BCRC 81048 / CCUG 64013 / CIP 107961 / Muc).